A 158-amino-acid polypeptide reads, in one-letter code: Persistence and stress-resistance toxin PasT (158 aa).

The interval 70-158 (GISKTFTTRN…VRAKEVYSAR (89 aa)) is required for resistance of nitrosative stress but not persistence or toxic effects.

This sequence belongs to the ribosome association toxin RatA family. In terms of assembly, associates with 50S ribosomes.

Toxic component of a type II toxin-antitoxin (TA) system. Binds to 50S ribosomal subunits, preventing them from associating with 30S subunits to form 70S ribosomes. In this strain of E.coli low levels of PasT complement operon disruption, however high levels are toxic; their effects are abrogated by high level expression of cognate antitoxin PasI. Plays a role in persistence after antibiotic exposure and survival of nitrosative stress; the toxic and persistence phenotypes are conferred by the same N-terminal region of the protein, while the stress resistance effects can be uncoupled from them in deletion mutants. This is Persistence and stress-resistance toxin PasT (pasT) from Escherichia coli O6:H1 (strain CFT073 / ATCC 700928 / UPEC).